The sequence spans 223 residues: Ribonuclease HII (223 aa).

The region spanning 32 to 223 (FHIAGVDEVG…LKGRFRDNMS (192 aa)) is the RNase H type-2 domain. Residues D38, E39, and D130 each contribute to the a divalent metal cation site.

This sequence belongs to the RNase HII family. The cofactor is Mn(2+). Mg(2+) serves as cofactor.

The protein resides in the cytoplasm. The enzyme catalyses Endonucleolytic cleavage to 5'-phosphomonoester.. Endonuclease that specifically degrades the RNA of RNA-DNA hybrids. This Bartonella quintana (strain Toulouse) (Rochalimaea quintana) protein is Ribonuclease HII.